The sequence spans 154 residues: Ribosome maturation factor RimP (154 aa).

Belongs to the RimP family.

The protein localises to the cytoplasm. Functionally, required for maturation of 30S ribosomal subunits. In Natranaerobius thermophilus (strain ATCC BAA-1301 / DSM 18059 / JW/NM-WN-LF), this protein is Ribosome maturation factor RimP.